The primary structure comprises 316 residues: Acetaldehyde dehydrogenase (316 aa).

11–14 (SGNI) contacts NAD(+). The active-site Acyl-thioester intermediate is cysteine 131. Residues 162 to 170 (SAGPGTRAN) and asparagine 289 each bind NAD(+).

It belongs to the acetaldehyde dehydrogenase family. In terms of assembly, interacts with MhpE.

The enzyme catalyses acetaldehyde + NAD(+) + CoA = acetyl-CoA + NADH + H(+). It participates in aromatic compound metabolism; 3-phenylpropanoate degradation. Catalyzes the conversion of acetaldehyde to acetyl-CoA, using NAD(+) and coenzyme A. Is the final enzyme in the meta-cleavage pathway for the degradation of aromatic compounds. The protein is Acetaldehyde dehydrogenase of Shigella sonnei (strain Ss046).